The chain runs to 326 residues: N-acetyl-gamma-glutamyl-phosphate reductase (326 aa).

Cys155 is an active-site residue.

The protein belongs to the NAGSA dehydrogenase family. Type 1 subfamily.

It is found in the cytoplasm. It catalyses the reaction N-acetyl-L-glutamate 5-semialdehyde + phosphate + NADP(+) = N-acetyl-L-glutamyl 5-phosphate + NADPH + H(+). It functions in the pathway amino-acid biosynthesis; L-arginine biosynthesis; N(2)-acetyl-L-ornithine from L-glutamate: step 3/4. Catalyzes the NADPH-dependent reduction of N-acetyl-5-glutamyl phosphate to yield N-acetyl-L-glutamate 5-semialdehyde. The protein is N-acetyl-gamma-glutamyl-phosphate reductase of Shewanella denitrificans (strain OS217 / ATCC BAA-1090 / DSM 15013).